A 367-amino-acid polypeptide reads, in one-letter code: Anhydro-N-acetylmuramic acid kinase (367 aa).

Residue glycine 11–aspartate 18 participates in ATP binding.

Belongs to the anhydro-N-acetylmuramic acid kinase family.

It carries out the reaction 1,6-anhydro-N-acetyl-beta-muramate + ATP + H2O = N-acetyl-D-muramate 6-phosphate + ADP + H(+). It participates in amino-sugar metabolism; 1,6-anhydro-N-acetylmuramate degradation. The protein operates within cell wall biogenesis; peptidoglycan recycling. In terms of biological role, catalyzes the specific phosphorylation of 1,6-anhydro-N-acetylmuramic acid (anhMurNAc) with the simultaneous cleavage of the 1,6-anhydro ring, generating MurNAc-6-P. Is required for the utilization of anhMurNAc either imported from the medium or derived from its own cell wall murein, and thus plays a role in cell wall recycling. In Bradyrhizobium diazoefficiens (strain JCM 10833 / BCRC 13528 / IAM 13628 / NBRC 14792 / USDA 110), this protein is Anhydro-N-acetylmuramic acid kinase.